We begin with the raw amino-acid sequence, 1561 residues long: Rho GTPase-activating protein 190 (1561 aa).

4 FF domains span residues tyrosine 252–lysine 320, tyrosine 365–serine 419, lysine 426–aspartate 480, and isoleucine 482–phenylalanine 547. The region spanning serine 592–leucine 765 is the pG1 pseudoGTPase domain. The region spanning arginine 766–glutamate 926 is the pG2 pseudoGTPase domain. Residues serine 973, serine 975, serine 985, serine 988, and serine 996 each carry the phosphoserine modification. The segment at lysine 1054–cysteine 1074 is disordered. A Rho-GAP domain is found at alanine 1349 to phenylalanine 1552.

Its activity is regulated as follows. Negatively regulated by integrin, bsk and Src/Src64B. In terms of biological role, GTPase-activating protein (GAP) for RhoA/Rho1 that plays an essential role in the stability of dorsal branches of mushroom body (MB) neurons. The MB neurons are the center for olfactory learning and memory. Acts by converting RhoA/Rho1 to an inactive GDP-bound state, leading to repress the RhoA/Rho1-Drok-MRLC signaling pathway thereby maintaining axon branch stability. The protein is Rho GTPase-activating protein 190 (RhoGAPp190) of Drosophila melanogaster (Fruit fly).